The sequence spans 95 residues: Integration host factor subunit beta (95 aa).

It belongs to the bacterial histone-like protein family. Heterodimer of an alpha and a beta chain.

This protein is one of the two subunits of integration host factor, a specific DNA-binding protein that functions in genetic recombination as well as in transcriptional and translational control. The sequence is that of Integration host factor subunit beta from Shewanella amazonensis (strain ATCC BAA-1098 / SB2B).